We begin with the raw amino-acid sequence, 222 residues long: Ras-related protein RabT1 (222 aa).

37 to 44 provides a ligand contact to GTP; it reads GDNKTGKS. Positions 59–66 match the Effector region motif; that stretch reads VSSIGVDF. Residues 85–89 and 145–148 contribute to the GTP site; these read DVNSC and NKCD. Position 219 is a cysteine methyl ester (cysteine 219). Residue cysteine 219 is the site of S-geranylgeranyl cysteine attachment. Positions 220 to 222 are cleaved as a propeptide — removed in mature form; the sequence is NIL.

Belongs to the small GTPase superfamily. Rab family.

It is found in the cell membrane. This Dictyostelium discoideum (Social amoeba) protein is Ras-related protein RabT1 (rabT1).